Here is a 248-residue protein sequence, read N- to C-terminus: tRNA (guanine-N(1)-)-methyltransferase (248 aa).

S-adenosyl-L-methionine-binding positions include Gly-113 and 133–138 (IGDYVL). The interval 227 to 248 (RPAQTIRAKGESQKTPKNKTDG) is disordered. A compositionally biased stretch (basic and acidic residues) spans 234–248 (AKGESQKTPKNKTDG).

Belongs to the RNA methyltransferase TrmD family. As to quaternary structure, homodimer.

It localises to the cytoplasm. The catalysed reaction is guanosine(37) in tRNA + S-adenosyl-L-methionine = N(1)-methylguanosine(37) in tRNA + S-adenosyl-L-homocysteine + H(+). Specifically methylates guanosine-37 in various tRNAs. This Rhodopseudomonas palustris (strain TIE-1) protein is tRNA (guanine-N(1)-)-methyltransferase.